The primary structure comprises 325 residues: Diacylglycerol acyltransferase/mycolyltransferase Ag85B (325 aa).

Residues 1–38 form the signal peptide; that stretch reads MTFIDKIRGHWARRMTVAAVAALLLPGLVGVVGGSATA. 82 to 83 serves as a coordination point for substrate; that stretch reads LR. Positions 98 to 108 are fibronectin-binding; it reads FEMFLDSGLSV. Cys127 and Cys132 form a disulfide bridge. Position 166 (Ser166) interacts with substrate. Residue Ser166 is the Nucleophile of the active site. The active site involves Glu272. Substrate is bound by residues 274–277 and 304–306; these read LTIR and HNW. Residue His304 is part of the active site.

It belongs to the mycobacterial A85 antigen family.

It localises to the secreted. It carries out the reaction 2 alpha,alpha'-trehalose 6-mycolate = alpha,alpha'-trehalose 6,6'-bismycolate + alpha,alpha-trehalose. The catalysed reaction is an acyl-CoA + a 1,2-diacyl-sn-glycerol = a triacyl-sn-glycerol + CoA. Functionally, the antigen 85 proteins (FbpA, FbpB, FbpC) are responsible for the high affinity of mycobacteria for fibronectin, a large adhesive glycoprotein. They also help to maintain the integrity of the cell wall by catalyzing the transfer of mycolic acids to cell wall arabinogalactan and through the synthesis of alpha,alpha-trehalose dimycolate (TDM, cord factor). They catalyze the transfer of a mycoloyl residue from one molecule of alpha,alpha-trehalose monomycolate (TMM) to another TMM, leading to the formation of TDM. In Mycolicibacterium smegmatis (strain ATCC 700084 / mc(2)155) (Mycobacterium smegmatis), this protein is Diacylglycerol acyltransferase/mycolyltransferase Ag85B (fbpB).